A 124-amino-acid polypeptide reads, in one-letter code: Fluoride-specific ion channel FluC (124 aa).

4 consecutive transmembrane segments (helical) span residues Phe4–Val24, Tyr35–Leu55, Leu67–Gly87, and Ala100–Leu120. Gly75 and Thr78 together coordinate Na(+).

The protein belongs to the fluoride channel Fluc/FEX (TC 1.A.43) family.

Its subcellular location is the cell inner membrane. The enzyme catalyses fluoride(in) = fluoride(out). With respect to regulation, na(+) is not transported, but it plays an essential structural role and its presence is essential for fluoride channel function. Its function is as follows. Fluoride-specific ion channel. Important for reducing fluoride concentration in the cell, thus reducing its toxicity. The sequence is that of Fluoride-specific ion channel FluC from Nitratidesulfovibrio vulgaris (strain ATCC 29579 / DSM 644 / CCUG 34227 / NCIMB 8303 / VKM B-1760 / Hildenborough) (Desulfovibrio vulgaris).